The following is a 215-amino-acid chain: UPF0502 protein YceH (215 aa).

Lys-80 is modified (N6-acetyllysine).

The protein belongs to the UPF0502 family.

This Shigella sonnei (strain Ss046) protein is UPF0502 protein YceH.